We begin with the raw amino-acid sequence, 375 residues long: Probable UDP-N-acetylglucosamine 2-epimerase (375 aa).

Belongs to the UDP-N-acetylglucosamine 2-epimerase family.

It localises to the cytoplasm. It catalyses the reaction UDP-N-acetyl-alpha-D-glucosamine = UDP-N-acetyl-alpha-D-mannosamine. It participates in glycan metabolism; exopolysaccharide EPS I biosynthesis. In terms of biological role, may be involved in synthesis of N-acetyltrideoxygalactose, a component of exopolysaccharide EPS I which functions as a virulence factor. This Ralstonia solanacearum (Pseudomonas solanacearum) protein is Probable UDP-N-acetylglucosamine 2-epimerase (epsC).